The primary structure comprises 347 residues: Lipoyl synthase (347 aa).

[4Fe-4S] cluster contacts are provided by Cys77, Cys82, Cys88, Cys103, Cys107, Cys110, and Ser317. The Radical SAM core domain maps to 89 to 306; the sequence is FADGTATFMI…MDYGKKIGFF (218 aa).

This sequence belongs to the radical SAM superfamily. Lipoyl synthase family. Requires [4Fe-4S] cluster as cofactor.

The protein resides in the cytoplasm. The enzyme catalyses [[Fe-S] cluster scaffold protein carrying a second [4Fe-4S](2+) cluster] + N(6)-octanoyl-L-lysyl-[protein] + 2 oxidized [2Fe-2S]-[ferredoxin] + 2 S-adenosyl-L-methionine + 4 H(+) = [[Fe-S] cluster scaffold protein] + N(6)-[(R)-dihydrolipoyl]-L-lysyl-[protein] + 4 Fe(3+) + 2 hydrogen sulfide + 2 5'-deoxyadenosine + 2 L-methionine + 2 reduced [2Fe-2S]-[ferredoxin]. It functions in the pathway protein modification; protein lipoylation via endogenous pathway; protein N(6)-(lipoyl)lysine from octanoyl-[acyl-carrier-protein]: step 2/2. Catalyzes the radical-mediated insertion of two sulfur atoms into the C-6 and C-8 positions of the octanoyl moiety bound to the lipoyl domains of lipoate-dependent enzymes, thereby converting the octanoylated domains into lipoylated derivatives. The polypeptide is Lipoyl synthase (Psychrobacter cryohalolentis (strain ATCC BAA-1226 / DSM 17306 / VKM B-2378 / K5)).